The chain runs to 214 residues: Proteasome subunit beta type-6 (214 aa).

The propeptide at 1–14 (MEAPEWLDNAVDLG) is removed in mature form. The active-site Nucleophile is threonine 15.

It belongs to the peptidase T1B family. In terms of assembly, the 26S proteasome consists of a 20S proteasome core and two 19S regulatory subunits. The 20S proteasome core is composed of 28 subunits that are arranged in four stacked rings, resulting in a barrel-shaped structure. The two end rings are each formed by seven alpha subunits, and the two central rings are each formed by seven beta subunits. The catalytic chamber with the active sites is on the inside of the barrel.

Its subcellular location is the cytoplasm. It localises to the nucleus. The enzyme catalyses Cleavage of peptide bonds with very broad specificity.. In terms of biological role, the proteasome is a multicatalytic proteinase complex which is characterized by its ability to cleave peptides with Arg, Phe, Tyr, Leu, and Glu adjacent to the leaving group at neutral or slightly basic pH. The proteasome has an ATP-dependent proteolytic activity. The polypeptide is Proteasome subunit beta type-6 (psmB6) (Dictyostelium discoideum (Social amoeba)).